Reading from the N-terminus, the 122-residue chain is Nitrogen fixation nifHD region GlnB-like protein 2 (122 aa).

This sequence belongs to the P(II) protein family.

Its function is as follows. Could be involved in the regulation of nitrogen fixation. This Methanobacterium ivanovii protein is Nitrogen fixation nifHD region GlnB-like protein 2 (glnBB).